The sequence spans 263 residues: (E)-2-((N-methylformamido)methylene)succinate hydrolase (263 aa).

The active-site Nucleophile is serine 96. Residues asparagine 120 and histidine 241 contribute to the active site.

It belongs to the AB hydrolase superfamily. In terms of assembly, monomer.

The enzyme catalyses (E)-2-((N-methylformamido) methylene)succinate + 2 H2O + H(+) = succinate semialdehyde + methylamine + formate + CO2. Functionally, involved in the degradation of the pyridine ring of trigonelline (TG; N-methylnicotinate) into succinate and methylamine as carbon and nitrogen sources, respectively. Catalyzes the hydrolysis of (E)-2-((N-methylformamido)methylene)succinate (MFMS) into formic acid, succinate semialdehyde (SSA), methylamine and carbon dioxide. The sequence is that of (E)-2-((N-methylformamido)methylene)succinate hydrolase from Acinetobacter baylyi (strain ATCC 33305 / BD413 / ADP1).